A 164-amino-acid chain; its full sequence is 2-C-methyl-D-erythritol 2,4-cyclodiphosphate synthase (164 aa).

A divalent metal cation contacts are provided by Asp8 and His10. 4-CDP-2-C-methyl-D-erythritol 2-phosphate-binding positions include 8 to 10 (DVH) and 34 to 35 (HS). Residue His42 coordinates a divalent metal cation. Residues 56–58 (DIG), 132–135 (TTEE), Phe139, and Lys142 each bind 4-CDP-2-C-methyl-D-erythritol 2-phosphate.

The protein belongs to the IspF family. Homotrimer. The cofactor is a divalent metal cation.

The catalysed reaction is 4-CDP-2-C-methyl-D-erythritol 2-phosphate = 2-C-methyl-D-erythritol 2,4-cyclic diphosphate + CMP. It participates in isoprenoid biosynthesis; isopentenyl diphosphate biosynthesis via DXP pathway; isopentenyl diphosphate from 1-deoxy-D-xylulose 5-phosphate: step 4/6. Its function is as follows. Involved in the biosynthesis of isopentenyl diphosphate (IPP) and dimethylallyl diphosphate (DMAPP), two major building blocks of isoprenoid compounds. Catalyzes the conversion of 4-diphosphocytidyl-2-C-methyl-D-erythritol 2-phosphate (CDP-ME2P) to 2-C-methyl-D-erythritol 2,4-cyclodiphosphate (ME-CPP) with a corresponding release of cytidine 5-monophosphate (CMP). The polypeptide is 2-C-methyl-D-erythritol 2,4-cyclodiphosphate synthase (Clostridium kluyveri (strain NBRC 12016)).